The sequence spans 31 residues: Sarcolipin (31 aa).

At Met1–Glu7 the chain is on the cytoplasmic side. Residues Leu8 to Val26 form a helical membrane-spanning segment. The Lumenal segment spans residues Arg27–Tyr31.

It belongs to the sarcolipin family. Homooligomer. Can also form heterooligomers with other sarcoplasmic/endoplasmic reticulum calcium ATPase (SERCA) regulators ARLN, ERLN, PLN and STRIT1/DWORF. Monomer. Interacts with calcium ATPase ATP2A1/SERCA1. Interacts as a monomer with ATP2A2/SERCA2; the interaction decreases ATP2A2 Ca(2+) affinity. Interacts with VMP1; VMP1 competes with PLN and SLN to prevent them from forming an inhibitory complex with ATP2A2. Skeletal muscle (at protein level).

The protein localises to the sarcoplasmic reticulum membrane. It is found in the endoplasmic reticulum membrane. In terms of biological role, reversibly inhibits the activity of ATP2A1/SERCA1 and ATP2A2/SERCA2 in sarcoplasmic reticulum by decreasing the apparent affinity of the ATPase for Ca(2+). Also inhibits the activity of ATP2A3/SERCA3. Modulates calcium re-uptake during muscle relaxation and plays an important role in calcium homeostasis in muscle. Required for muscle-based, non-shivering thermogenesis. This chain is Sarcolipin (SLN), found in Oryctolagus cuniculus (Rabbit).